The chain runs to 1765 residues: Sodium channel protein type 11 subunit alpha (1765 aa).

Topologically, residues 1 to 126 (MEERYYPVIF…PIRSFMIRIS (126 aa)) are cytoplasmic. The stretch at 115–406 (FNPIRSFMIR…VTMAYEEQNR (292 aa)) is one I repeat. Residues 127 to 148 (VHSVFSMFIICTVIINCMFMAN) form a helical membrane-spanning segment. A glycan (N-linked (GlcNAc...) asparagine) is linked at Asn149. At 149-159 (NSSVDSRPSSN) the chain is on the extracellular side. A helical transmembrane segment spans residues 160-179 (IPEYVFIGIYVLEAVIKILA). Over 180-191 (RGFIVDEFSYLR) the chain is Cytoplasmic. Residues 192 to 211 (DPWNWLDFIVIGTAIAPCFL) form a helical membrane-spanning segment. The Extracellular portion of the chain corresponds to 212–219 (GNKVNNLS). An N-linked (GlcNAc...) asparagine glycan is attached at Asn217. The helical; Voltage-sensor transmembrane segment at 220-239 (TLRTFRVLRALKAISVISGL) threads the bilayer. Residues 240–255 (KVIVGALLRSVKKLVD) lie on the Cytoplasmic side of the membrane. The chain crosses the membrane as a helical span at residues 256-269 (VMVLTLFCLSIFAL). Over 270-342 (VGQQLFMGIL…PDYNYTNFDS (73 aa)) the chain is Extracellular. A disulfide bridge links Cys283 with Cys320. Asn303, Asn327, and Asn336 each carry an N-linked (GlcNAc...) asparagine glycan. Residues 343-367 (FGWSFLAMFRVMTQDSWEKLYRQIL) constitute an intramembrane region (pore-forming). At 368–374 (RTSGIYF) the chain is on the extracellular side. The chain crosses the membrane as a helical span at residues 375 to 400 (VFFFVVVIFLGSFYLLNLTLAVVTMA). Residues 401 to 570 (YEEQNRNVAA…WLCIKKVLQT (170 aa)) are Cytoplasmic-facing. Residues 470 to 490 (RGSKTARASASDSEDDASKNP) are disordered. An II repeat occupies 557 to 821 (CSPPWLCIKK…EGETRKTKVQ (265 aa)). A helical membrane pass occupies residues 571–594 (IMTDPFTELAITICIIVNTVFLAM). Topologically, residues 595 to 605 (EHHNMDNSLKD) are extracellular. Residues 606-629 (ILKIGNWVFTGIFIAEMCLKIIAL) traverse the membrane as a helical segment. Over 630-637 (DPYHYFRH) the chain is Cytoplasmic. Residues 638-659 (GWNIFDSIVALVSLADVLFHKL) traverse the membrane as a helical segment. The Extracellular portion of the chain corresponds to 660-664 (SKNLS). The N-linked (GlcNAc...) asparagine glycan is linked to Asn662. Residues 665-684 (FLASLRVLRVFKLAKSWPTL) form a helical; Voltage-sensor membrane-spanning segment. At 685-699 (NTLIKIIGHSVGALG) the chain is on the cytoplasmic side. The helical transmembrane segment at 700–722 (NLTVVLTIVVFIFSVVGMRLFGA) threads the bilayer. Topologically, residues 723–742 (KFNKTCSTSPESLRRWHMGD) are extracellular. Asn725 carries an N-linked (GlcNAc...) asparagine glycan. Positions 743 to 763 (FYHSFLVVFRILCGEWIENMW) form an intramembrane region, pore-forming. Residues 764–773 (ECMQEMEGSP) lie on the Extracellular side of the membrane. Residues Cys765 and Cys775 are joined by a disulfide bond. A helical membrane pass occupies residues 774–799 (LCVIVFVLIMVVGKLVVLNLFIALLL). At 800–1030 (NSFSNEEKDG…WWNLRKTCYQ (231 aa)) the chain is on the cytoplasmic side. The interval 850-869 (NSPKPNEATESFAGESRDTA) is disordered. The III repeat unit spans residues 1023–1320 (NLRKTCYQIV…KKYYNAMKKL (298 aa)). The chain crosses the membrane as a helical span at residues 1031–1053 (IVKHSWFESFIIFVILLSSGALI). Residues 1054-1067 (FEDVNLPSRPQVEK) lie on the Extracellular side of the membrane. A helical membrane pass occupies residues 1068 to 1093 (LLKCTDNIFTFIFLLEMILKWVAFGF). Residues 1094–1099 (RKYFTS) are Cytoplasmic-facing. The chain crosses the membrane as a helical span at residues 1100–1117 (AWCWLDFLIVVVSGLSLT). A topological domain (extracellular) is located at residue Asn1118. The chain crosses the membrane as a helical; Voltage-sensor span at residues 1119 to 1140 (LPNLKSFRNLRALRPLRALSQF). Residues 1141-1159 (EGMKVVVNALMSAIPAILN) are Cytoplasmic-facing. Residues 1160–1181 (VLLVCLIFWLIFCILGVNFFSG) traverse the membrane as a helical segment. At 1182–1224 (KFGRCINGTDINKYFNASNVPNQSQCLVSNYTWKVPNVNFDNV) the chain is on the extracellular side. N-linked (GlcNAc...) asparagine glycosylation is found at Asn1188, Asn1197, Asn1203, and Asn1211. The segment at residues 1225-1246 (GNAYLALLQVATYKGWLDIMNA) is an intramembrane region (pore-forming). Topologically, residues 1247 to 1262 (AVDSRGKDEQPAFEAN) are extracellular. The chain crosses the membrane as a helical span at residues 1263 to 1289 (LYAYLYFVVFIIFGSFFTLNLFIGVII). The Cytoplasmic portion of the chain corresponds to 1290–1342 (DNFNQQQKKLGGQDIFMTEEQKKYYNAMKKLGTKKPQKPIPRPLNKCQAFVFD). The stretch at 1329-1619 (IPRPLNKCQA…WEKFDPEATQ (291 aa)) is one IV repeat. The helical transmembrane segment at 1343–1366 (LVTSQVFDVIILGLIVTNMIIMMA) threads the bilayer. The Extracellular segment spans residues 1367-1377 (ESEGQPNEVKK). The chain crosses the membrane as a helical span at residues 1378–1401 (IFDILNIVFVVIFTVECLIKVFAL). Over 1402–1407 (RQHYFT) the chain is Cytoplasmic. Residues 1408-1431 (NGWNLFDCVVVVLSIISTLVSGLE) traverse the membrane as a helical segment. Topologically, residues 1432–1440 (NSNVFPPTL) are extracellular. The chain crosses the membrane as a helical; Voltage-sensor span at residues 1441–1463 (FRIVRLARIGRILRLVRAARGIR). Residues 1464 to 1478 (TLLFALMMSLPSLFN) lie on the Cytoplasmic side of the membrane. Residues 1479 to 1501 (IGLLLFLVMFIYAIFGMNWFSKV) traverse the membrane as a helical segment. The Extracellular portion of the chain corresponds to 1502–1515 (KRGSGIDDIFNFDT). Positions 1516–1538 (FSGSMLCLFQITTSAGWDALLNP) form an intramembrane region, pore-forming. The Extracellular segment spans residues 1539 to 1559 (MLESKASCNSSSQESCQQPQI). A helical transmembrane segment spans residues 1560-1584 (AIVYFVSYIIISFLIVVNMYIAVIL). Residues 1585 to 1765 (ENFNTATEES…DVPKIKVHCD (181 aa)) lie on the Cytoplasmic side of the membrane.

This sequence belongs to the sodium channel (TC 1.A.1.10) family. Nav1.9/SCN11A subfamily. The voltage-resistant sodium channel consists of an ion conducting pore forming alpha-subunit regulated by one or more auxiliary subunits SCN1B, SCN2B and SCN3B. As to expression, expressed in the dorsal root ganglia (C-fiber neurons), spinal cord, trigeminal ganglia, testis, ovary, uterus and small intestine.

It is found in the cell membrane. It carries out the reaction Na(+)(in) = Na(+)(out). Sodium channel mediating the voltage-dependent sodium ion permeability of excitable membranes. Assuming opened or closed conformations in response to the voltage difference across the membrane, the protein forms a sodium-selective channel through which sodium ions may pass in accordance with their electrochemical gradient. Involved in membrane depolarization during action potential in nociceptors which function as key relay stations for the electrical transmission of pain signals from the periphery to the central nervous system. Also involved in rapid BDNF-evoked neuronal depolarization. The chain is Sodium channel protein type 11 subunit alpha from Mus musculus (Mouse).